The following is a 2705-amino-acid chain: Teneurin-1 (2705 aa).

Disordered regions lie at residues M1–D73 and C135–S222. Residues M1–C299 form the Teneurin N-terminal domain. Over M1–T305 the chain is Cytoplasmic. Basic and acidic residues predominate over residues D32–L46. The Nuclear localization signal (NLS) motif lies at R62–K65. A compositionally biased stretch (polar residues) spans C135–T147. Basic and acidic residues predominate over residues D148–G157. The span at P173 to H182 shows a compositional bias: pro residues. The short motif at P271–R278 is the Required for interaction with SORBS1 (Ten-1 ICD form) element. The helical transmembrane segment at A306 to L326 threads the bilayer. Residues T327–R2705 lie on the Extracellular side of the membrane. An N-linked (GlcNAc...) asparagine glycan is attached at N414. EGF-like domains are found at residues V509 to A540, K541 to V572, P573 to E605, E606 to T638, S639 to S672, T673 to C702, E703 to T734, and I735 to N769. Cystine bridges form between C513–C523, C517–C528, C530–C539, C548–C559, C561–C570, C577–C588, C582–C593, C595–C604, C609–C620, C614–C625, C627–C636, C647–C660, C662–C671, C676–C686, C680–C691, C693–C702, C707–C717, C711–C722, C724–C733, C738–C748, C742–C757, and C759–C768. Residues N878 and N1057 are each glycosylated (N-linked (GlcNAc...) asparagine). NHL repeat units lie at residues L1167 to I1192, L1202 to L1246, S1272 to I1316, L1331 to R1382, and C1461 to N1504. The YD 1 repeat unit spans residues Y1514–H1533. 2 N-linked (GlcNAc...) asparagine glycosylation sites follow: N1530 and N1547. 4 YD repeats span residues Y1550–R1570, Y1588–T1612, Y1613–E1634, and Y1635–H1655. Residues N1643, N1679, N1737, N1761, and N1822 are each glycosylated (N-linked (GlcNAc...) asparagine). YD repeat units follow at residues Y1825 to E1844, Y1845 to T1865, Y1866 to E1884, Y1885 to Q1905, Y1913 to D1929, V1930 to L1949, Y1950 to T1969, Y1972 to T1992, Y1995 to V2015, Y2065 to N2085, and Y2093 to M2113. An N-linked (GlcNAc...) asparagine glycan is attached at N2125. YD repeat units follow at residues Y2133–S2153, Y2154–L2174, Y2176–G2196, Y2208–Y2228, and Y2230–F2250. N2265 carries N-linked (GlcNAc...) asparagine glycosylation. 2 YD repeats span residues Y2276–Y2293 and Y2294–I2317. N2582 is a glycosylation site (N-linked (GlcNAc...) asparagine).

The protein belongs to the tenascin family. Teneurin subfamily. As to quaternary structure, homodimer; disulfide-linked. Heterodimer with other teneurins. Ten-1 ICD interacts with SORBS1 (via third SH3 domain). Interacts with MBD1 isoform 2. Derives from the plasma membrane form by proteolytic processing. Further proteolytic cleavage may be generated. Post-translationally, derives from the plasma membrane form by proteolytic cleavage and translocates to the nucleus. In terms of tissue distribution, expressed in the neurons of the developing visual system and in fetal brain.

Its subcellular location is the cell membrane. It localises to the nucleus. The protein localises to the nucleus speckle. It is found in the nucleus matrix. The protein resides in the cytoplasm. Its subcellular location is the cytoskeleton. In terms of biological role, involved in neural development, regulating the establishment of proper connectivity within the nervous system. May function as a cellular signal transducer. Plays a role in the regulation of neuroplasticity in the limbic system. Mediates a rapid reorganization of actin- and tubulin-based cytoskeleton elements with an increase in dendritic arborization and spine density formation of neurons in the hippocampus and amygdala. Induces BDNF transcription inhibition in neurons. Activates the mitogen-activated protein (MAP) kinase 2 (MEK2) and extracellular signal-regulated kinase (ERK) cascade. Functionally, induces gene transcription activation. The polypeptide is Teneurin-1 (TENM1) (Gallus gallus (Chicken)).